The following is a 175-amino-acid chain: Alkyl hydroperoxide reductase AhpD (175 aa).

Catalysis depends on C131, which acts as the Proton donor. A disulfide bond links C131 and C134. Residue C134 is the Cysteine sulfenic acid (-SOH) intermediate of the active site.

The protein belongs to the AhpD family.

The catalysed reaction is N(6)-[(R)-dihydrolipoyl]-L-lysyl-[lipoyl-carrier protein] + a hydroperoxide = N(6)-[(R)-lipoyl]-L-lysyl-[lipoyl-carrier protein] + an alcohol + H2O. Its function is as follows. Antioxidant protein with alkyl hydroperoxidase activity. Required for the reduction of the AhpC active site cysteine residues and for the regeneration of the AhpC enzyme activity. The polypeptide is Alkyl hydroperoxide reductase AhpD (Brucella anthropi (strain ATCC 49188 / DSM 6882 / CCUG 24695 / JCM 21032 / LMG 3331 / NBRC 15819 / NCTC 12168 / Alc 37) (Ochrobactrum anthropi)).